The chain runs to 388 residues: Cell adhesion molecule 4 (388 aa).

The signal sequence occupies residues 1–20; the sequence is MGRARRFQWPLLLLWAAAAG. An Ig-like V-type domain is found at 21–119; the sequence is PGTAQEVQTE…DTHHQIATLT (99 aa). Residues 25 to 324 lie on the Extracellular side of the membrane; sequence QEVQTENVTV…VEAQTSVPYA (300 aa). N-linked (GlcNAc...) asparagine glycans are attached at residues Asn-31 and Asn-67. 3 cysteine pairs are disulfide-bonded: Cys-44/Cys-104, Cys-145/Cys-199, and Cys-245/Cys-291. Ig-like C2-type domains lie at 124–219 and 224–307; these read PENP…YVLD and PTAR…YVLV. Asn-286 carries N-linked (GlcNAc...) asparagine glycosylation. A helical membrane pass occupies residues 325-345; that stretch reads IVGGILALLVFLIICVLVGMV. Residues 346–388 are Cytoplasmic-facing; it reads WCSVRQKGSYLTHEASGLDEQGEAREAFLNGSDGHKRKEEFFI. Ser-361 carries the phosphoserine modification.

The protein belongs to the nectin family. In terms of assembly, monomer and homodimer. Post-translationally, N-glycosylated.

Its subcellular location is the membrane. In terms of biological role, involved in the cell-cell adhesion. Has calcium- and magnesium-independent cell-cell adhesion activity. May have tumor-suppressor activity. This Rattus norvegicus (Rat) protein is Cell adhesion molecule 4 (Cadm4).